Consider the following 213-residue polypeptide: NADH dehydrogenase [ubiquinone] iron-sulfur protein 7, mitochondrial (213 aa).

The N-terminal 31 residues, 1-31 (MALIARNAKLLTGTAPFLQRAATIHTTLPSL), are a transit peptide targeting the mitochondrion. Residues 30-42 (SLSQQPASSPATS) are compositionally biased toward low complexity. The tract at residues 30–52 (SLSQQPASSPATSGGAQPPSMNT) is disordered. Residues Cys-88, Cys-89, Cys-153, and Cys-183 each contribute to the [4Fe-4S] cluster site.

Belongs to the complex I 20 kDa subunit family. In terms of assembly, complex I is composed of about 45 different subunits. This is a component of the iron-sulfur (IP) fragment of the enzyme. [4Fe-4S] cluster is required as a cofactor.

Its subcellular location is the mitochondrion. It catalyses the reaction a ubiquinone + NADH + 5 H(+)(in) = a ubiquinol + NAD(+) + 4 H(+)(out). In terms of biological role, core subunit of the mitochondrial membrane respiratory chain NADH dehydrogenase (Complex I) that is believed to belong to the minimal assembly required for catalysis. Complex I functions in the transfer of electrons from NADH to the respiratory chain. The immediate electron acceptor for the enzyme is believed to be ubiquinone. In Solanum tuberosum (Potato), this protein is NADH dehydrogenase [ubiquinone] iron-sulfur protein 7, mitochondrial.